Consider the following 172-residue polypeptide: Light-harvesting complex-like protein OHP2, chloroplastic (172 aa).

A chloroplast-targeting transit peptide spans 1 to 43 (MSVASPIQCIRILNPSSSSSSSTASSSFRFSTTTKPCVFIIRC). The Stromal segment spans residues 44-135 (SQTEGPLRRP…QPKNEISNGR (92 aa)). The tract at residues 45-90 (QTEGPLRRPSAPPTLREPQKPVPPSQPSSSPPPSPPPQKAVAVDGK) is disordered. The span at 64-82 (KPVPPSQPSSSPPPSPPPQ) shows a compositional bias: pro residues. Residues 136-156 (WAMFGFAVGMLTEYATGSDLV) traverse the membrane as a helical segment. Residues 157–172 (DQVKILLSNFGILDLE) are Lumenal-facing.

The protein belongs to the ELIP/psbS family. Component of a high molecular weight complex containing OHP1, OHP2 and HCF244, and PSII core proteins D1/D2, HCF136 and HCF173. Forms a trimeric complex with OHP1 and HCF244 that mutually stabilizes each subunit.

The protein resides in the plastid. The protein localises to the chloroplast thylakoid membrane. In terms of biological role, may play a photoprotective role within PSI in response to light stress. Forms a trimeric complex with OHP1 and HCF244 that is required to promote PSII core subunit assembly. The trimeric complex forms a transient PSII reaction center-like complex with PsbA, PsbD, PsbE, PsbF and PsbI subunits in thylakoids for early assembly of PSII as well as PSII repair. The trimeric complex is required for the recruitment of ribosomes to the psbA mRNA during PSII biogenesis and repair. Forms a heterodimer with OHP1 that binds chlorophylls and carotenoids, and that may function in the delivery of pigments to the PsbA subunit of PSII. The polypeptide is Light-harvesting complex-like protein OHP2, chloroplastic (Arabidopsis thaliana (Mouse-ear cress)).